The sequence spans 348 residues: UDP-glucose 4-epimerase (348 aa).

NAD(+) contacts are provided by residues 12-14, 33-37, 66-67, F88, and K92; these read GYI, DNFHN, and DI. Position 132-134 (132-134) interacts with substrate; the sequence is SAT. The active-site Proton acceptor is Y157. Positions 161 and 185 each coordinate NAD(+). Substrate is bound by residues 185-187, 206-208, 224-226, R239, and 300-303; these read YFN, NNL, NVF, and REGD.

The protein belongs to the NAD(P)-dependent epimerase/dehydratase family. Homodimer. It depends on NAD(+) as a cofactor.

The enzyme catalyses UDP-alpha-D-glucose = UDP-alpha-D-galactose. It carries out the reaction UDP-N-acetyl-alpha-D-glucosamine = UDP-N-acetyl-alpha-D-galactosamine. It participates in carbohydrate metabolism; galactose metabolism. Its function is as follows. Catalyzes two distinct but analogous reactions: the reversible epimerization of UDP-glucose to UDP-galactose and the reversible epimerization of UDP-N-acetylglucosamine to UDP-N-acetylgalactosamine. The reaction with UDP-Gal plays a critical role in the Leloir pathway of galactose catabolism in which galactose is converted to the glycolytic intermediate glucose 6-phosphate. It contributes to the catabolism of dietary galactose and enables the endogenous biosynthesis of both UDP-Gal and UDP-GalNAc when exogenous sources are limited. Both UDP-sugar interconversions are important in the synthesis of glycoproteins and glycolipids. The sequence is that of UDP-glucose 4-epimerase from Homo sapiens (Human).